The following is a 480-amino-acid chain: Type VI lipase adapter protein Tla3 (480 aa).

The segment at 410 to 458 is disordered; sequence ISSPTPGKKPVHDPFGVDLLPQTASGDGPPPSADPVAPASRLTTRLPPG.

As to quaternary structure, interacts with the Tle3 toxin on one side and with the H2-T6SS component VgrG2b on the other side.

Its subcellular location is the cytoplasm. Its function is as follows. Adapter protein that targets and loads the Tle3 toxin onto the H2 type VI secretion system (H2-T6SS) machinery through an interaction with the TTR domain of VgrG2b. Seems specific for Tle3. This Pseudomonas aeruginosa (strain ATCC 15692 / DSM 22644 / CIP 104116 / JCM 14847 / LMG 12228 / 1C / PRS 101 / PAO1) protein is Type VI lipase adapter protein Tla3.